A 342-amino-acid polypeptide reads, in one-letter code: S-adenosylmethionine:tRNA ribosyltransferase-isomerase (342 aa).

It belongs to the QueA family. As to quaternary structure, monomer.

It is found in the cytoplasm. The enzyme catalyses 7-aminomethyl-7-carbaguanosine(34) in tRNA + S-adenosyl-L-methionine = epoxyqueuosine(34) in tRNA + adenine + L-methionine + 2 H(+). Its pathway is tRNA modification; tRNA-queuosine biosynthesis. Functionally, transfers and isomerizes the ribose moiety from AdoMet to the 7-aminomethyl group of 7-deazaguanine (preQ1-tRNA) to give epoxyqueuosine (oQ-tRNA). In Bacillus licheniformis (strain ATCC 14580 / DSM 13 / JCM 2505 / CCUG 7422 / NBRC 12200 / NCIMB 9375 / NCTC 10341 / NRRL NRS-1264 / Gibson 46), this protein is S-adenosylmethionine:tRNA ribosyltransferase-isomerase.